Here is a 166-residue protein sequence, read N- to C-terminus: UPF0179 protein Tneu_1978 (166 aa).

Positions 140 to 166 are disordered; it reads PPSPSKSGGATASRDPSRAPPSRPLSK. Pro residues predominate over residues 157 to 166; the sequence is RAPPSRPLSK.

This sequence belongs to the UPF0179 family.

This is UPF0179 protein Tneu_1978 from Pyrobaculum neutrophilum (strain DSM 2338 / JCM 9278 / NBRC 100436 / V24Sta) (Thermoproteus neutrophilus).